A 786-amino-acid chain; its full sequence is MWIQVRTMDGKVAHTVDSLSRLTKVEELRKKIQELFHVEPGLQRLFYRGKQMEDGHTLFDYDVRLNDTIQLLVRQSLVLPVPVPSSSGGSKERDSELSDTDSGCGLAQSESDKSSNSGEAANEPEGKADEDECDETELGLYKVGEYVDARDTNMGAWFEAKVIRVTRKAPAHDQPSSSSSKPEDDIIYHVTYDDYPENGVVQMTSQNVRARARHTIKWEDLQVGQVVMVNYNPDLPKDRGFWYDAEILRKRETRTARELHANVRIGGDSLNDCRIVFVDEVFKIERPGEGNPMVENPMRRKSGPSCKHCKDDERKLCRMCACHVCGGKQDPDKQLMCDECDMAFHIYCLRPPLSSVPPEEEWYCPDCRIDSSEVVQAGEKLKESKKKAKMASATSSSQRDWGKGMACVGRTKECTIVPSNHFGPIPGIPVGTMWRFRVQVSESGVHRPHVAGIHGRSNHGAYSLVLAGGYEDDVDHGNSFTYTGSGGRDLSGNKRTAEQSCDQKLTNTNRALALNCFAPINDLKGAEAKDWRSGKPVRVVRNVKGRKHSKYAPIEGNRYDGIYKVVRYWPEKGKSGFLVWRFLLRRDDVEPGPWTKEGKDRIKKLGLTMQYPEGYLEALARKEKENSKQAALDKEEEDGEEGFTSPRKGKRKSKSAGGDGSSRGTPKKTKVEPYSLTTQQSSLIKEDKSNMKLWTEILKSLKDGPKFLSKVEETFQCICCQELVFRPITTVCQHNVCKDCLDRSFKAQVFSCPACRYDLGRSYAMTVNQPLQAVLSQLFPGYGSGR.

The Ubiquitin-like domain maps to 1–78; the sequence is MWIQVRTMDG…IQLLVRQSLV (78 aa). Phosphoserine occurs at positions 76, 98, and 102. Residues 82-134 are disordered; the sequence is PVPSSSGGSKERDSELSDTDSGCGLAQSESDKSSNSGEAANEPEGKADEDECD. Tudor-like regions lie at residues 139-213 and 220-287; these read GLYK…ARAR and DLQV…IERP. Lysine 283 participates in a covalent cross-link: Glycyl lysine isopeptide (Lys-Gly) (interchain with G-Cter in SUMO2). The tract at residues 300–305 is linker; it reads RKSGPS. Serine 302 bears the Phosphoserine; by PKA mark. The PHD-type zinc-finger motif lies at 303–370; sequence GPSCKHCKDD…EWYCPDCRID (68 aa). 2 histone H3R2me0 binding regions span residues 337–341 and 357–359; these read CDECD and PPE. Serine 372 is subject to Phosphoserine. Residue lysine 389 forms a Glycyl lysine isopeptide (Lys-Gly) (interchain with G-Cter in SUMO2) linkage. Lysine 403 carries the post-translational modification N6-acetyllysine. Residues 423-586 form the YDG domain; that stretch reads GPIPGIPVGT…FLVWRFLLRR (164 aa). Residues 449–450 are required to promote base flipping; it reads HV. DNA-binding positions include 467–468 and aspartate 473; that span reads AG. Required for formation of a 5-methylcytosine-binding pocket stretches follow at residues 470-473 and 482-485; these read YEDD and YTGS. Lysine 550 is modified (N6-acetyllysine; alternate). Lysine 550 participates in a covalent cross-link: Glycyl lysine isopeptide (Lys-Gly) (interchain with G-Cter in SUMO2); alternate. A disordered region spans residues 626–679; sequence NSKQAALDKEEEDGEEGFTSPRKGKRKSKSAGGDGSSRGTPKKTKVEPYSLTTQ. Serine 645 is modified (phosphoserine; by CDK1). 2 positions are modified to phosphoserine: serine 655 and serine 662. A Glycyl lysine isopeptide (Lys-Gly) (interchain with G-Cter in SUMO2) cross-link involves residue lysine 670. Residues 717–756 form an RING-type zinc finger; that stretch reads CICCQELVFRPITTVCQHNVCKDCLDRSFKAQVFSCPACR.

In terms of assembly, interacts with DNMT3A and DNMT3B. Interacts with DNMT1; the interaction is direct. Interacts with USP7; leading to its deubiquitination. Interacts with histone H3. Interacts with HDAC1, but not with HDAC2. Interacts with BLTP3A. Interacts with PML. Interacts with EHMT2. Binds methylated CpG containing oligonucleotides. Interacts with ZNF263; recruited to the SIX3 promoter along with other proteins involved in chromatin modification and transcriptional corepression where it contributes to transcriptional repression. Interacts with UHRF2. Interacts with FANCD2. Interacts with TET1 isoform 2; this interaction induces the recruitment of TET1 isoform 2 to replicating heterochromatin. Phosphorylation at Ser-302 of the linker region decreases the binding to H3K9me3. Phosphorylation at Ser-645 by CDK1 during M phase impairs interaction with USP7, preventing deubiquitination and leading to degradation by the proteasome. Post-translationally, ubiquitinated; which leads to proteasomal degradation. Autoubiquitinated; interaction with USP7 leads to deubiquitination and prevents degradation. Ubiquitination and degradation takes place during M phase, when phosphorylation at Ser-645 prevents interaction with USP7 and subsequent deubiquitination. Polyubiquitination may be stimulated by DNA damage.

The protein resides in the nucleus. The catalysed reaction is S-ubiquitinyl-[E2 ubiquitin-conjugating enzyme]-L-cysteine + [acceptor protein]-L-lysine = [E2 ubiquitin-conjugating enzyme]-L-cysteine + N(6)-ubiquitinyl-[acceptor protein]-L-lysine.. The protein operates within protein modification; protein ubiquitination. Multidomain protein that acts as a key epigenetic regulator by bridging DNA methylation and chromatin modification. Specifically recognizes and binds hemimethylated DNA at replication forks via its YDG domain and recruits DNMT1 methyltransferase to ensure faithful propagation of the DNA methylation patterns through DNA replication. In addition to its role in maintenance of DNA methylation, also plays a key role in chromatin modification: through its tudor-like regions and PHD-type zinc fingers, specifically recognizes and binds histone H3 trimethylated at 'Lys-9' (H3K9me3) and unmethylated at 'Arg-2' (H3R2me0), respectively, and recruits chromatin proteins. Enriched in pericentric heterochromatin where it recruits different chromatin modifiers required for this chromatin replication. Also localizes to euchromatic regions where it negatively regulates transcription possibly by impacting DNA methylation and histone modifications. Has E3 ubiquitin-protein ligase activity by mediating the ubiquitination of target proteins such as histone H3 and PML. It is still unclear how E3 ubiquitin-protein ligase activity is related to its role in chromatin in vivo. Plays a role in DNA repair by cooperating with UHRF2 to ensure recruitment of FANCD2 to interstrand cross-links (ICLs) leading to FANCD2 activation. Plays a pivotal role in the establishment of correct spindle architecture by catalyzing the 'Lys-63'-linked ubiquitination of KIF11, thereby controlling KIF11 localization on the spindle. This Bos taurus (Bovine) protein is E3 ubiquitin-protein ligase UHRF1 (UHRF1).